The primary structure comprises 354 residues: Fe(3+) ions import ATP-binding protein FbpC (354 aa).

The region spanning 4 to 236 is the ABC transporter domain; it reads LELHAVHKSF…PRDAQTALFL (233 aa). 36 to 43 lines the ATP pocket; that stretch reads GPSGSGKT.

It belongs to the ABC transporter superfamily. Fe(3+) ion importer (TC 3.A.1.10) family. As to quaternary structure, the complex is composed of two ATP-binding proteins (FbpC), two transmembrane proteins (FbpB) and a solute-binding protein (FbpA).

It localises to the cell inner membrane. The catalysed reaction is Fe(3+)(out) + ATP + H2O = Fe(3+)(in) + ADP + phosphate + H(+). Part of the ABC transporter complex FbpABC involved in Fe(3+) ions import. Responsible for energy coupling to the transport system. This is Fe(3+) ions import ATP-binding protein FbpC from Pseudomonas fluorescens (strain ATCC BAA-477 / NRRL B-23932 / Pf-5).